We begin with the raw amino-acid sequence, 263 residues long: tRNA (guanine-N(7)-)-methyltransferase (263 aa).

The segment covering 1-10 (MLPQDPSTEP) has biased composition (polar residues). The disordered stretch occupies residues 1 to 38 (MLPQDPSTEPTPADDAAPVDSAGQASAPSPADPEGVAH). The S-adenosyl-L-methionine site is built by E91, E116, D143, and D166. Residue D166 is part of the active site. Residue K170 coordinates substrate. Residues 172–177 (RHNKRR) form an interaction with RNA region. Substrate contacts are provided by residues D202 and 240–243 (TKFE).

It belongs to the class I-like SAM-binding methyltransferase superfamily. TrmB family.

It catalyses the reaction guanosine(46) in tRNA + S-adenosyl-L-methionine = N(7)-methylguanosine(46) in tRNA + S-adenosyl-L-homocysteine. It functions in the pathway tRNA modification; N(7)-methylguanine-tRNA biosynthesis. In terms of biological role, catalyzes the formation of N(7)-methylguanine at position 46 (m7G46) in tRNA. The protein is tRNA (guanine-N(7)-)-methyltransferase of Cupriavidus necator (strain ATCC 17699 / DSM 428 / KCTC 22496 / NCIMB 10442 / H16 / Stanier 337) (Ralstonia eutropha).